Reading from the N-terminus, the 341-residue chain is HTH-type transcriptional repressor PurR (341 aa).

The HTH lacI-type domain maps to 2–56; sequence ATIKDVAKRANVSTTTVSHVINKTRFVAEETRNAVWAAIKELHYSPSAVARSLKV. The H-T-H motif DNA-binding region spans 4–23; the sequence is IKDVAKRANVSTTTVSHVIN. Residues 48 to 56 mediate DNA binding; it reads SAVARSLKV. Hypoxanthine contacts are provided by tyrosine 73, arginine 190, threonine 192, phenylalanine 221, and aspartate 275.

Homodimer.

It participates in purine metabolism; purine nucleotide biosynthesis [regulation]. In terms of biological role, is the main repressor of the genes involved in the de novo synthesis of purine nucleotides, regulating purB, purC, purEK, purF, purHD, purL, purMN and guaBA expression. PurR is allosterically activated to bind its cognate DNA by binding the purine corepressors, hypoxanthine or guanine, thereby effecting transcription repression. The chain is HTH-type transcriptional repressor PurR from Escherichia coli (strain UTI89 / UPEC).